A 125-amino-acid chain; its full sequence is Lymphocyte antigen 6 complex locus protein G6c (125 aa).

An N-terminal signal peptide occupies residues 1–18 (MRALLLLSLSALLCWVSA). Positions 20–111 (IRCHSCYKLP…PRPTPALTLV (92 aa)) constitute a UPAR/Ly6 domain. 3 cysteine pairs are disulfide-bonded: Cys-22–Cys-47, Cys-25–Cys-33, and Cys-39–Cys-65. Asn-88 is a glycosylation site (N-linked (GlcNAc...) asparagine). Residues Cys-92 and Cys-97 are joined by a disulfide bond. Ser-99 carries the GPI-anchor amidated serine lipid modification. The propeptide at 100 to 125 (PAPRPTPALTLVFLTSLAGLGLWLLH) is removed in mature form.

Post-translationally, N-glycosylated.

The protein resides in the cell membrane. The chain is Lymphocyte antigen 6 complex locus protein G6c (LY6G6C) from Bos taurus (Bovine).